A 262-amino-acid chain; its full sequence is Hemin import ATP-binding protein HmuV (262 aa).

The 247-residue stretch at 1–247 folds into the ABC transporter domain; sequence MRNLTLQRGR…ERIKQIFAFD (247 aa). Position 31 to 38 (31 to 38) interacts with ATP; the sequence is GPNGTGKS.

The protein belongs to the ABC transporter superfamily. Heme (hemin) importer (TC 3.A.1.14.5) family. In terms of assembly, the complex is composed of two ATP-binding proteins (HmuV), two transmembrane proteins (HmuU) and a solute-binding protein (HmuT).

The protein resides in the cell inner membrane. Functionally, part of the ABC transporter complex HmuTUV involved in hemin import. Responsible for energy coupling to the transport system. The chain is Hemin import ATP-binding protein HmuV from Plesiomonas shigelloides (Aeromonas shigelloides).